The following is a 224-amino-acid chain: ATP-dependent dethiobiotin synthetase BioD (224 aa).

12–17 (GVGKTF) contributes to the ATP binding site. Threonine 16 contacts Mg(2+). Lysine 37 is an active-site residue. Threonine 41 lines the substrate pocket. A Mg(2+)-binding site is contributed by glutamate 107. ATP-binding positions include 107-110 (EGAG), 167-168 (GS), 197-199 (PEG), and glutamate 204.

Belongs to the dethiobiotin synthetase family. In terms of assembly, homodimer. Mg(2+) serves as cofactor.

Its subcellular location is the cytoplasm. The catalysed reaction is (7R,8S)-7,8-diammoniononanoate + CO2 + ATP = (4R,5S)-dethiobiotin + ADP + phosphate + 3 H(+). It participates in cofactor biosynthesis; biotin biosynthesis; biotin from 7,8-diaminononanoate: step 1/2. In terms of biological role, catalyzes a mechanistically unusual reaction, the ATP-dependent insertion of CO2 between the N7 and N8 nitrogen atoms of 7,8-diaminopelargonic acid (DAPA, also called 7,8-diammoniononanoate) to form a ureido ring. The chain is ATP-dependent dethiobiotin synthetase BioD from Corynebacterium glutamicum (strain R).